The following is a 45-amino-acid chain: Cytochrome b559 subunit beta (45 aa).

T2 is subject to N-acetylthreonine. The Cytoplasmic segment spans residues 2–17 (TSNTPNQEPVSYPIFT). A helical transmembrane segment spans residues 18–42 (VRWVAVHTLAVPTIFFLGAIAAMQF). A heme-binding site is contributed by H24. Residues 43–45 (IQR) are Lumenal-facing.

Heterodimer of an alpha subunit and a beta subunit. PSII is composed of 1 copy each of membrane proteins PsbA, PsbB, PsbC, PsbD, PsbE, PsbF, PsbH, PsbI, PsbJ, PsbK, PsbL, PsbM, PsbT, PsbX, PsbY, PsbZ, Psb30/Ycf12, peripheral proteins PsbO, CyanoQ (PsbQ), PsbU, PsbV and a large number of cofactors. It forms dimeric complexes. Part of a photosystem II (PSII) assembly intermediate complex PSII-I; crystallized from a strain deleted of psbJ, it forms monomeric PSII before addition of the oxygen evolving complex. PSII-I includes 3 assembly factors not found in mature PSII (Psb27, Psb28 and Psb34). Heme b is required as a cofactor.

Its subcellular location is the cellular thylakoid membrane. In terms of biological role, this b-type cytochrome is tightly associated with the reaction center of photosystem II (PSII). PSII is a light-driven water:plastoquinone oxidoreductase that uses light energy to abstract electrons from H(2)O, generating O(2) and a proton gradient subsequently used for ATP formation. It consists of a core antenna complex that captures photons, and an electron transfer chain that converts photonic excitation into a charge separation. This chain is Cytochrome b559 subunit beta, found in Thermosynechococcus vestitus (strain NIES-2133 / IAM M-273 / BP-1).